A 480-amino-acid polypeptide reads, in one-letter code: Ribosomal protein uS12 methylthiotransferase RimO (480 aa).

The 122-residue stretch at 14 to 135 (LSVAMVTLGC…IAARLRSIVA (122 aa)) folds into the MTTase N-terminal domain. Positions 23, 59, 98, 193, 197, and 200 each coordinate [4Fe-4S] cluster. Residues 179–410 (LDDGPTAALK…DLVEELTSQR (232 aa)) form the Radical SAM core domain. The TRAM domain maps to 412–480 (AERLGEQVEV…EGADLDARPL (69 aa)).

It belongs to the methylthiotransferase family. RimO subfamily. It depends on [4Fe-4S] cluster as a cofactor.

The protein localises to the cytoplasm. The catalysed reaction is L-aspartate(89)-[ribosomal protein uS12]-hydrogen + (sulfur carrier)-SH + AH2 + 2 S-adenosyl-L-methionine = 3-methylsulfanyl-L-aspartate(89)-[ribosomal protein uS12]-hydrogen + (sulfur carrier)-H + 5'-deoxyadenosine + L-methionine + A + S-adenosyl-L-homocysteine + 2 H(+). Catalyzes the methylthiolation of an aspartic acid residue of ribosomal protein uS12. This Nocardioides sp. (strain ATCC BAA-499 / JS614) protein is Ribosomal protein uS12 methylthiotransferase RimO.